Here is a 349-residue protein sequence, read N- to C-terminus: GTP 3',8-cyclase (349 aa).

One can recognise a Radical SAM core domain in the interval 24 to 250 (PFGRAVTYLR…DIPYRTGGPA (227 aa)). Position 33 (Arg33) interacts with GTP. 2 residues coordinate [4Fe-4S] cluster: Cys40 and Cys44. An S-adenosyl-L-methionine-binding site is contributed by Tyr46. [4Fe-4S] cluster is bound at residue Cys47. Arg82 provides a ligand contact to GTP. Position 86 (Gly86) interacts with S-adenosyl-L-methionine. Thr116 serves as a coordination point for GTP. S-adenosyl-L-methionine is bound at residue Ser140. Lys176 is a GTP binding site. Met210 is an S-adenosyl-L-methionine binding site. [4Fe-4S] cluster contacts are provided by Cys273 and Cys276. 278–280 (RVR) provides a ligand contact to GTP. Cys290 contacts [4Fe-4S] cluster.

The protein belongs to the radical SAM superfamily. MoaA family. In terms of assembly, monomer and homodimer. [4Fe-4S] cluster serves as cofactor.

The catalysed reaction is GTP + AH2 + S-adenosyl-L-methionine = (8S)-3',8-cyclo-7,8-dihydroguanosine 5'-triphosphate + 5'-deoxyadenosine + L-methionine + A + H(+). It participates in cofactor biosynthesis; molybdopterin biosynthesis. In terms of biological role, catalyzes the cyclization of GTP to (8S)-3',8-cyclo-7,8-dihydroguanosine 5'-triphosphate. This is GTP 3',8-cyclase from Rhizobium meliloti (strain 1021) (Ensifer meliloti).